A 445-amino-acid polypeptide reads, in one-letter code: Phosphoglucosamine mutase (445 aa).

Ser-102 acts as the Phosphoserine intermediate in catalysis. Ser-102, Asp-241, Asp-243, and Asp-245 together coordinate Mg(2+). At Ser-102 the chain carries Phosphoserine.

Belongs to the phosphohexose mutase family. Mg(2+) serves as cofactor. Post-translationally, activated by phosphorylation.

The enzyme catalyses alpha-D-glucosamine 1-phosphate = D-glucosamine 6-phosphate. Catalyzes the conversion of glucosamine-6-phosphate to glucosamine-1-phosphate. The chain is Phosphoglucosamine mutase from Shewanella pealeana (strain ATCC 700345 / ANG-SQ1).